We begin with the raw amino-acid sequence, 381 residues long: Probable tRNA sulfurtransferase (381 aa).

Residues 57–160 (EKGIEKLKSV…NKAYVYSKKI (104 aa)) form the THUMP domain. ATP contacts are provided by residues 177-178 (ML), 202-203 (YF), Arg259, Gly281, and Gln290.

This sequence belongs to the ThiI family.

Its subcellular location is the cytoplasm. It carries out the reaction [ThiI sulfur-carrier protein]-S-sulfanyl-L-cysteine + a uridine in tRNA + 2 reduced [2Fe-2S]-[ferredoxin] + ATP + H(+) = [ThiI sulfur-carrier protein]-L-cysteine + a 4-thiouridine in tRNA + 2 oxidized [2Fe-2S]-[ferredoxin] + AMP + diphosphate. The catalysed reaction is [ThiS sulfur-carrier protein]-C-terminal Gly-Gly-AMP + S-sulfanyl-L-cysteinyl-[cysteine desulfurase] + AH2 = [ThiS sulfur-carrier protein]-C-terminal-Gly-aminoethanethioate + L-cysteinyl-[cysteine desulfurase] + A + AMP + 2 H(+). It participates in cofactor biosynthesis; thiamine diphosphate biosynthesis. In terms of biological role, catalyzes the ATP-dependent transfer of a sulfur to tRNA to produce 4-thiouridine in position 8 of tRNAs, which functions as a near-UV photosensor. Also catalyzes the transfer of sulfur to the sulfur carrier protein ThiS, forming ThiS-thiocarboxylate. This is a step in the synthesis of thiazole, in the thiamine biosynthesis pathway. The sulfur is donated as persulfide by IscS. The polypeptide is Probable tRNA sulfurtransferase (Clostridium kluyveri (strain NBRC 12016)).